The primary structure comprises 485 residues: Adenosylhomocysteinase (485 aa).

Residues Thr64, Asp139, and Glu205 each contribute to the substrate site. Residue 206-208 participates in NAD(+) binding; the sequence is TTT. Substrate-binding residues include Lys235 and Asp239. Residues Asn240, 269-274, Glu292, Asn327, 348-350, and Asn397 contribute to the NAD(+) site; these read GYGDVG and IGH.

It belongs to the adenosylhomocysteinase family. The cofactor is NAD(+).

The catalysed reaction is S-adenosyl-L-homocysteine + H2O = L-homocysteine + adenosine. It participates in amino-acid biosynthesis; L-homocysteine biosynthesis; L-homocysteine from S-adenosyl-L-homocysteine: step 1/1. Functionally, adenosylhomocysteine is a competitive inhibitor of S-adenosyl-L-methionine-dependent methyl transferase reactions; therefore adenosylhomocysteinase may play a key role in the control of methylations via regulation of the intracellular concentration of adenosylhomocysteine. In Lupinus luteus (European yellow lupine), this protein is Adenosylhomocysteinase (SAHH).